The chain runs to 898 residues: DNA topoisomerase 1 (898 aa).

In terms of domain architecture, Toprim spans 2–126; it reads SKLVIVESPT…IKRMVFHEIT (125 aa). E8 and D95 together coordinate Mg(2+). Residues 141–583 form the Topo IA-type catalytic domain; the sequence is DENLVHAQET…GFFLGESGLE (443 aa). Residues 175–180 are interaction with DNA; it reads SAGRVQ. Y320 serves as the catalytic O-(5'-phospho-DNA)-tyrosine intermediate. The tract at residues 840 to 898 is disordered; the sequence is AEKAGSGKKTSRKKATTTAKGTKKTTSKKASATGTAKKTTTKRTTRKKAASPDQSSEAG. Basic residues predominate over residues 848-866; sequence KTSRKKATTTAKGTKKTTS. Low complexity predominate over residues 867 to 877; that stretch reads KKASATGTAKK. Basic residues predominate over residues 878-888; sequence TTTKRTTRKKA.

It belongs to the type IA topoisomerase family. Monomer. Mg(2+) serves as cofactor.

The catalysed reaction is ATP-independent breakage of single-stranded DNA, followed by passage and rejoining.. Its function is as follows. Releases the supercoiling and torsional tension of DNA, which is introduced during the DNA replication and transcription, by transiently cleaving and rejoining one strand of the DNA duplex. Introduces a single-strand break via transesterification at a target site in duplex DNA. The scissile phosphodiester is attacked by the catalytic tyrosine of the enzyme, resulting in the formation of a DNA-(5'-phosphotyrosyl)-enzyme intermediate and the expulsion of a 3'-OH DNA strand. The free DNA strand then undergoes passage around the unbroken strand, thus removing DNA supercoils. Finally, in the religation step, the DNA 3'-OH attacks the covalent intermediate to expel the active-site tyrosine and restore the DNA phosphodiester backbone. This is DNA topoisomerase 1 from Synechocystis sp. (strain ATCC 27184 / PCC 6803 / Kazusa).